Consider the following 189-residue polypeptide: Large ribosomal subunit protein eL18 (189 aa).

It belongs to the eukaryotic ribosomal protein eL18 family.

Its subcellular location is the cytoplasm. The polypeptide is Large ribosomal subunit protein eL18 (RpL18) (Anopheles gambiae (African malaria mosquito)).